Reading from the N-terminus, the 956-residue chain is Netrin receptor UNC5D (956 aa).

Positions 1–30 (MGTGAADRSRGARWWLPWLGLCFWAAGAEA) are cleaved as a signal peptide. Residues 31–382 (ARGADSGEVL…SRRGIENASD (352 aa)) are Extracellular-facing. Residues 52 to 149 (PHFIEEPEDA…LGTSKSRKAS (98 aa)) form the Ig-like domain. 9 disulfide bridges follow: Cys-73–Cys-134, Cys-85–Cys-132, Cys-178–Cys-229, Cys-262–Cys-299, Cys-266–Cys-303, Cys-277–Cys-289, Cys-318–Cys-352, Cys-322–Cys-357, and Cys-330–Cys-342. The interval 89 to 91 (WVH) is important for interaction with FLRT2. N-linked (GlcNAc...) asparagine glycans are attached at residues Asn-115 and Asn-226. The Ig-like C2-type domain occupies 164-242 (QGREVPIEGM…NIVAKRRSLS (79 aa)). TSP type-1 domains follow at residues 250-304 (NGGW…ALCP) and 306-358 (DGSW…GLCI). Residues 383–403 (IALYSGLGAAVVAVAVLVIGV) traverse the membrane as a helical segment. The Cytoplasmic portion of the chain corresponds to 404 to 956 (TLYRRSHSDY…DFNYSRQNGL (553 aa)). The ZU5 domain occupies 545–685 (LRTTGVFGHL…FGTYALTGEP (141 aa)). Residues 862–939 (QRICATFDTP…RTHTKLSNIT (78 aa)) form the Death domain.

It belongs to the unc-5 family. Interacts (via extracellular domain) with FLRT2 and FLRT3 (via extracellular domain); the interaction is direct. Has higher affinity for FLRT2. Identified in a complex with FLRT3 and ADGRL3; does not interact with ADGRL3 by itself. In terms of processing, proteolytically cleaved by caspases during apoptosis. The cleavage does not take place when the receptor is associated with netrin ligand. Its cleavage by caspases is required to induce apoptosis.

Its subcellular location is the cell membrane. Functionally, receptor for the netrin NTN4 that promotes neuronal cell survival. Plays a role in cell-cell adhesion and cell guidance. Receptor for netrin involved in cell migration. Plays a role in axon guidance by mediating axon repulsion of neuronal growth cones in the developing nervous system upon ligand binding. May play a role in apoptosis in response to DNA damage. It also acts as a dependence receptor required for apoptosis induction when not associated with netrin ligand. Mediates cell-cell adhesion via its interaction with FLRT3 on an adjacent cell. The chain is Netrin receptor UNC5D from Rattus norvegicus (Rat).